The sequence spans 201 residues: Holliday junction resolvase RecU (201 aa).

4 residues coordinate Mg(2+): Thr87, Asp89, Asp102, and Gln121.

It belongs to the RecU family. Mg(2+) is required as a cofactor.

It localises to the cytoplasm. The enzyme catalyses Endonucleolytic cleavage at a junction such as a reciprocal single-stranded crossover between two homologous DNA duplexes (Holliday junction).. Its function is as follows. Endonuclease that resolves Holliday junction intermediates in genetic recombination. Cleaves mobile four-strand junctions by introducing symmetrical nicks in paired strands. Promotes annealing of linear ssDNA with homologous dsDNA. Required for DNA repair, homologous recombination and chromosome segregation. In Levilactobacillus brevis (strain ATCC 367 / BCRC 12310 / CIP 105137 / JCM 1170 / LMG 11437 / NCIMB 947 / NCTC 947) (Lactobacillus brevis), this protein is Holliday junction resolvase RecU.